The primary structure comprises 521 residues: Maturase K (521 aa).

This sequence belongs to the intron maturase 2 family. MatK subfamily.

The protein localises to the plastid. It is found in the chloroplast. In terms of biological role, usually encoded in the trnK tRNA gene intron. Probably assists in splicing its own and other chloroplast group II introns. This chain is Maturase K, found in Anthericum liliago (St-Bernard's lily).